We begin with the raw amino-acid sequence, 246 residues long: 1-(5-phosphoribosyl)-5-[(5-phosphoribosylamino)methylideneamino] imidazole-4-carboxamide isomerase (246 aa).

D12 (proton acceptor) is an active-site residue. D134 functions as the Proton donor in the catalytic mechanism.

It belongs to the HisA/HisF family.

It localises to the cytoplasm. The enzyme catalyses 1-(5-phospho-beta-D-ribosyl)-5-[(5-phospho-beta-D-ribosylamino)methylideneamino]imidazole-4-carboxamide = 5-[(5-phospho-1-deoxy-D-ribulos-1-ylimino)methylamino]-1-(5-phospho-beta-D-ribosyl)imidazole-4-carboxamide. Its pathway is amino-acid biosynthesis; L-histidine biosynthesis; L-histidine from 5-phospho-alpha-D-ribose 1-diphosphate: step 4/9. The chain is 1-(5-phosphoribosyl)-5-[(5-phosphoribosylamino)methylideneamino] imidazole-4-carboxamide isomerase from Haloarcula marismortui (strain ATCC 43049 / DSM 3752 / JCM 8966 / VKM B-1809) (Halobacterium marismortui).